The chain runs to 154 residues: Protein FAM162A (154 aa).

The required for proapoptotic activity stretch occupies residues Arg76–Lys102. A helical transmembrane segment spans residues Ile103–Ile120.

This sequence belongs to the UPF0389 family. As to quaternary structure, interacts with HSP90AB1; HSP90AB1 is essential for FAM162A mitochondrial localization and pro-apoptotic activity. Interacts with VDAC2; the interaction is probably involved in inducing mitochondrial permeability transition.

Its subcellular location is the mitochondrion membrane. In terms of biological role, proposed to be involved in regulation of apoptosis; the exact mechanism may differ between cell types/tissues. May be involved in hypoxia-induced cell death of transformed cells implicating cytochrome C release and caspase activation (such as CASP9) and inducing mitochondrial permeability transition. May be involved in hypoxia-induced cell death of neuronal cells probably by promoting release of AIFM1 from mitochondria to cytoplasm and its translocation to the nucleus; however, the involvement of caspases has been reported conflictingly. The chain is Protein FAM162A (FAM162A) from Homo sapiens (Human).